The following is a 193-amino-acid chain: ATP synthase subunit b 1 (193 aa).

The tract at residues 9–28 (QEADHTAGETHTETGVAEGG) is disordered. Basic and acidic residues predominate over residues 10–20 (EADHTAGETHT). Residues 40 to 59 (TYPSQLLWLAITFGLFYLFL) form a helical membrane-spanning segment.

The protein belongs to the ATPase B chain family. F-type ATPases have 2 components, F(1) - the catalytic core - and F(0) - the membrane proton channel. F(1) has five subunits: alpha(3), beta(3), gamma(1), delta(1), epsilon(1). F(0) has three main subunits: a(1), b(2) and c(10-14). The alpha and beta chains form an alternating ring which encloses part of the gamma chain. F(1) is attached to F(0) by a central stalk formed by the gamma and epsilon chains, while a peripheral stalk is formed by the delta and b chains.

The protein localises to the cell inner membrane. Its function is as follows. F(1)F(0) ATP synthase produces ATP from ADP in the presence of a proton or sodium gradient. F-type ATPases consist of two structural domains, F(1) containing the extramembraneous catalytic core and F(0) containing the membrane proton channel, linked together by a central stalk and a peripheral stalk. During catalysis, ATP synthesis in the catalytic domain of F(1) is coupled via a rotary mechanism of the central stalk subunits to proton translocation. Component of the F(0) channel, it forms part of the peripheral stalk, linking F(1) to F(0). In Chelativorans sp. (strain BNC1), this protein is ATP synthase subunit b 1.